A 393-amino-acid chain; its full sequence is Flavohemoprotein (393 aa).

One can recognise a Globin domain in the interval 1 to 139 (MLSAEHRAIV…LADLLIGLEE (139 aa)). Residue H85 participates in heme b binding. Residues Y95 and E138 each act as charge relay system in the active site. A reductase region spans residues 150-393 (GGWRGTRAFV…EFFGPASALD (244 aa)). An FAD-binding FR-type domain is found at 153–256 (RGTRAFVVAR…LTPSGDFTLE (104 aa)). FAD is bound by residues Y191 and 205 to 208 (RNYS). Position 268–273 (268–273 (GVGITP)) interacts with NADP(+). 385 to 388 (FFGP) is a binding site for FAD.

Belongs to the globin family. Two-domain flavohemoproteins subfamily. This sequence in the C-terminal section; belongs to the flavoprotein pyridine nucleotide cytochrome reductase family. Heme b is required as a cofactor. FAD serves as cofactor.

It carries out the reaction 2 nitric oxide + NADPH + 2 O2 = 2 nitrate + NADP(+) + H(+). The enzyme catalyses 2 nitric oxide + NADH + 2 O2 = 2 nitrate + NAD(+) + H(+). Its function is as follows. Is involved in NO detoxification in an aerobic process, termed nitric oxide dioxygenase (NOD) reaction that utilizes O(2) and NAD(P)H to convert NO to nitrate, which protects the bacterium from various noxious nitrogen compounds. Therefore, plays a central role in the inducible response to nitrosative stress. This chain is Flavohemoprotein, found in Burkholderia sp. (strain TH2).